A 295-amino-acid chain; its full sequence is 33 kDa chaperonin (295 aa).

Intrachain disulfides connect cysteine 238-cysteine 240 and cysteine 271-cysteine 274.

This sequence belongs to the HSP33 family. Post-translationally, under oxidizing conditions two disulfide bonds are formed involving the reactive cysteines. Under reducing conditions zinc is bound to the reactive cysteines and the protein is inactive.

It localises to the cytoplasm. In terms of biological role, redox regulated molecular chaperone. Protects both thermally unfolding and oxidatively damaged proteins from irreversible aggregation. Plays an important role in the bacterial defense system toward oxidative stress. In Levilactobacillus brevis (strain ATCC 367 / BCRC 12310 / CIP 105137 / JCM 1170 / LMG 11437 / NCIMB 947 / NCTC 947) (Lactobacillus brevis), this protein is 33 kDa chaperonin.